The sequence spans 330 residues: D-alanine--D-alanine ligase (330 aa).

Residues 120-326 (KLWYDALGIP…FKTFLQKAVL (207 aa)) enclose the ATP-grasp domain. 150 to 205 (AFKQWGGLFVKAACQGSSVGCYKVTSEAELSKAINDAFGYSQQVLVEKAVKPRELE) contacts ATP. Mg(2+) is bound by residues D280, E293, and N295.

The protein belongs to the D-alanine--D-alanine ligase family. Mg(2+) serves as cofactor. It depends on Mn(2+) as a cofactor.

Its subcellular location is the cytoplasm. It catalyses the reaction 2 D-alanine + ATP = D-alanyl-D-alanine + ADP + phosphate + H(+). Its pathway is cell wall biogenesis; peptidoglycan biosynthesis. Functionally, cell wall formation. In Aliivibrio fischeri (strain ATCC 700601 / ES114) (Vibrio fischeri), this protein is D-alanine--D-alanine ligase.